The following is a 478-amino-acid chain: Cytochrome c-552 (478 aa).

The first 26 residues, 1 to 26 (MTRIKINARRIFSLLIPFFFFTSVHA), serve as a signal peptide directing secretion. Residue His94 coordinates heme c. Residues Cys122, Cys125, and Lys126 each contribute to the heme site. Residues Cys160, Cys163, His164, Cys209, Cys212, and His213 each coordinate heme c. The Ca(2+) site is built by Glu215, Tyr216, Lys261, and Gln263. Residue Tyr216 participates in substrate binding. His264 contributes to the substrate binding site. Residues His275, Cys282, Cys285, His286, His301, Cys314, Cys317, His318, and His393 each coordinate heme c.

The protein belongs to the cytochrome c-552 family. The cofactor is Ca(2+). Heme c is required as a cofactor.

It is found in the periplasm. The catalysed reaction is 6 Fe(III)-[cytochrome c] + NH4(+) + 2 H2O = 6 Fe(II)-[cytochrome c] + nitrite + 8 H(+). It participates in nitrogen metabolism; nitrate reduction (assimilation). Its function is as follows. Catalyzes the reduction of nitrite to ammonia, consuming six electrons in the process. This is Cytochrome c-552 from Escherichia coli O9:H4 (strain HS).